The chain runs to 439 residues: Glutamyl-tRNA reductase (439 aa).

Substrate contacts are provided by residues 48–51 (TCNR), S107, 112–114 (EPQ), and Q118. C49 acts as the Nucleophile in catalysis. NADP(+) is bound at residue 187–192 (GAGEMA).

It belongs to the glutamyl-tRNA reductase family. As to quaternary structure, homodimer.

The catalysed reaction is (S)-4-amino-5-oxopentanoate + tRNA(Glu) + NADP(+) = L-glutamyl-tRNA(Glu) + NADPH + H(+). Its pathway is porphyrin-containing compound metabolism; protoporphyrin-IX biosynthesis; 5-aminolevulinate from L-glutamyl-tRNA(Glu): step 1/2. Catalyzes the NADPH-dependent reduction of glutamyl-tRNA(Glu) to glutamate 1-semialdehyde (GSA). The sequence is that of Glutamyl-tRNA reductase from Maridesulfovibrio salexigens (strain ATCC 14822 / DSM 2638 / NCIMB 8403 / VKM B-1763) (Desulfovibrio salexigens).